The chain runs to 369 residues: tRNA/tmRNA (uracil-C(5))-methyltransferase (369 aa).

Residues Q193, Y221, N226, E242, and D302 each coordinate S-adenosyl-L-methionine. The active-site Nucleophile is C327. E361 serves as the catalytic Proton acceptor.

Belongs to the class I-like SAM-binding methyltransferase superfamily. RNA M5U methyltransferase family. TrmA subfamily.

It carries out the reaction uridine(54) in tRNA + S-adenosyl-L-methionine = 5-methyluridine(54) in tRNA + S-adenosyl-L-homocysteine + H(+). The catalysed reaction is uridine(341) in tmRNA + S-adenosyl-L-methionine = 5-methyluridine(341) in tmRNA + S-adenosyl-L-homocysteine + H(+). Dual-specificity methyltransferase that catalyzes the formation of 5-methyluridine at position 54 (m5U54) in all tRNAs, and that of position 341 (m5U341) in tmRNA (transfer-mRNA). The chain is tRNA/tmRNA (uracil-C(5))-methyltransferase from Sulfurimonas denitrificans (strain ATCC 33889 / DSM 1251) (Thiomicrospira denitrificans (strain ATCC 33889 / DSM 1251)).